Here is a 310-residue protein sequence, read N- to C-terminus: Aspartate carbamoyltransferase catalytic subunit (310 aa).

Arg55 and Thr56 together coordinate carbamoyl phosphate. Position 85 (Lys85) interacts with L-aspartate. Carbamoyl phosphate is bound by residues Arg106, His135, and Gln138. Arg168 and Arg230 together coordinate L-aspartate. Leu268 and Pro269 together coordinate carbamoyl phosphate.

This sequence belongs to the aspartate/ornithine carbamoyltransferase superfamily. ATCase family. In terms of assembly, heterododecamer (2C3:3R2) of six catalytic PyrB chains organized as two trimers (C3), and six regulatory PyrI chains organized as three dimers (R2).

It carries out the reaction carbamoyl phosphate + L-aspartate = N-carbamoyl-L-aspartate + phosphate + H(+). It functions in the pathway pyrimidine metabolism; UMP biosynthesis via de novo pathway; (S)-dihydroorotate from bicarbonate: step 2/3. In terms of biological role, catalyzes the condensation of carbamoyl phosphate and aspartate to form carbamoyl aspartate and inorganic phosphate, the committed step in the de novo pyrimidine nucleotide biosynthesis pathway. This Buchnera aphidicola subsp. Acyrthosiphon pisum (strain APS) (Acyrthosiphon pisum symbiotic bacterium) protein is Aspartate carbamoyltransferase catalytic subunit.